Reading from the N-terminus, the 26-residue chain is Acyl carrier protein (26 aa).

The Carrier domain maps to Ser-2 to Glu-26.

Belongs to the acyl carrier protein (ACP) family. 4'-phosphopantetheine is transferred from CoA to a specific serine of apo-ACP by AcpS. This modification is essential for activity because fatty acids are bound in thioester linkage to the sulfhydryl of the prosthetic group.

The protein localises to the cytoplasm. The protein operates within lipid metabolism; fatty acid biosynthesis. In terms of biological role, carrier of the growing fatty acid chain in fatty acid biosynthesis. This chain is Acyl carrier protein (acpP), found in Acinetobacter calcoaceticus.